We begin with the raw amino-acid sequence, 312 residues long: MEVKNCCMVTEFILLGIPHTEGLEMTLFVLFLPFYACTLLGNVSILVAVMSSARLHTPMYFFLGNLSVFDMGFSSVTCPKMLLYLMGLSRLISYKDCVCQLFFFHFLGSIECFLFTVMAYDRFTAICYPLRYTVIMNPRICVALAVGTWLLGCIHSSILTSLTFTLPYCGPNEVDHFFCDIPALLPLACADTSLAQRVSFTNVGLISLVCFLLILLSYTRITISILSIRTTEGRRRAFSTCSAHLIAILCAYGPIITVYLQPTPNPMLGTVVQILMNLVGPMLNPLIYTLRNKEVKTALKTILHRTGHVPES.

The Extracellular segment spans residues 1–26 (MEVKNCCMVTEFILLGIPHTEGLEMT). Residues 27 to 47 (LFVLFLPFYACTLLGNVSILV) form a helical membrane-spanning segment. Topologically, residues 48 to 57 (AVMSSARLHT) are cytoplasmic. A helical membrane pass occupies residues 58–78 (PMYFFLGNLSVFDMGFSSVTC). Topologically, residues 79–97 (PKMLLYLMGLSRLISYKDC) are extracellular. Cys97 and Cys179 are oxidised to a cystine. A helical membrane pass occupies residues 98–118 (VCQLFFFHFLGSIECFLFTVM). Over 119–139 (AYDRFTAICYPLRYTVIMNPR) the chain is Cytoplasmic. Residues 140–160 (ICVALAVGTWLLGCIHSSILT) form a helical membrane-spanning segment. Residues 161 to 197 (SLTFTLPYCGPNEVDHFFCDIPALLPLACADTSLAQR) are Extracellular-facing. The chain crosses the membrane as a helical span at residues 198–218 (VSFTNVGLISLVCFLLILLSY). Residues 219 to 239 (TRITISILSIRTTEGRRRAFS) are Cytoplasmic-facing. A helical membrane pass occupies residues 240–260 (TCSAHLIAILCAYGPIITVYL). Residues 261 to 266 (QPTPNP) are Extracellular-facing. The chain crosses the membrane as a helical span at residues 267–287 (MLGTVVQILMNLVGPMLNPLI). Residues 288-312 (YTLRNKEVKTALKTILHRTGHVPES) are Cytoplasmic-facing.

This sequence belongs to the G-protein coupled receptor 1 family.

Its subcellular location is the cell membrane. Functionally, odorant receptor. In Homo sapiens (Human), this protein is Olfactory receptor 10D3.